Reading from the N-terminus, the 307-residue chain is Ribosomal RNA large subunit methyltransferase F (307 aa).

It belongs to the methyltransferase superfamily. METTL16/RlmF family.

The protein resides in the cytoplasm. It carries out the reaction adenosine(1618) in 23S rRNA + S-adenosyl-L-methionine = N(6)-methyladenosine(1618) in 23S rRNA + S-adenosyl-L-homocysteine + H(+). Specifically methylates the adenine in position 1618 of 23S rRNA. The polypeptide is Ribosomal RNA large subunit methyltransferase F (Bacteroides thetaiotaomicron (strain ATCC 29148 / DSM 2079 / JCM 5827 / CCUG 10774 / NCTC 10582 / VPI-5482 / E50)).